The following is a 653-amino-acid chain: MHWTPEHAQPLNQWPEQHLDVSSTTPSPAHKLELPPGGRQRCHYAWAHDDISALTASNLLKRYAEKYSGVLDSPYERPALGGYSDASFLNGAKGDPEPWPGPEPPYPLASLHEGLPGTKSGGGGGSGALGGSPVLAGNLPEPLYAGNACGGPSAAPEYAAGYGGGYLAPGYCAQTGAALPPPPPAALLQPPPPPGYGPSAPLYNYPAGGYAAQPGYGALPPPPGPPPAPYLTPGLPAPTPLPAPAPPTAYGFPTAAPGAESGLSLKRKAADEGPEGRYRKYAYEPAKAPVADGASYPAADNGECRGNGFRAKPPGAAEEASGKYGGGVPLKVLGSPVYGPQLEPFEKFPERAPAPRGGFAVPSGETPKGVDPGALELVTSKMVDCGPPVQWADVAGQGALKAALEEELVWPLLRPPAYPGSLRPPRTVLLFGPRGAGKALLGRCLATQLGATLLRLRGATLAAPGAAEGARLLQAAFAAARCRPPSVLLISELEALLPARDDGAAAGGALQVPLLACLDGGCGAGADGVLVVGTTSRPAALDEATRRRFSLRFYVALPDSPARGQILQRALAQQGCALSERELAALVQGTQGFSGGELGQLCQQAAAGAGLPGLQRPLSYKDLEAALAKVGPRASAKELDSFVEWDKMYGSGH.

Disordered regions lie at residues 1–36, 86–129, and 216–240; these read MHWT…ELPP, ASFL…SGAL, and YGAL…APTP. The segment covering 10–27 has biased composition (polar residues); the sequence is PLNQWPEQHLDVSSTTPS. The span at 97–107 shows a compositional bias: pro residues; sequence EPWPGPEPPYP. Over residues 119–129 the composition is skewed to gly residues; the sequence is KSGGGGGSGAL. The span at 219 to 240 shows a compositional bias: pro residues; it reads LPPPPGPPPAPYLTPGLPAPTP. ATP is bound by residues alanine 395 and 435-440; that span reads GAGKAL.

The protein belongs to the AAA ATPase family. Mg(2+) is required as a cofactor.

The protein localises to the cytoplasm. Its subcellular location is the cell cortex. The catalysed reaction is ATP + H2O = ADP + phosphate + H(+). Microtubule-severing enzyme that negatively regulates cell migration and wound healing. In migrating cells, targets dynamic microtubules (MTs) at the leading edge and severs them, thereby suppressing motility. Microtubule severing releases ARHGEF2 which activates RHOA, which in turn regulates focal ahesion turnover via focal adhesion kinase, as opposed to F-actin polymerization, to suppress cell motility. Negative regulator of axon regeneration that suppresses axonal growth by selectively severing dynamic MTs in the distal axon shaft and growth cone. Contributes to proper cell branching during endothelial and neuronal development. This chain is Fidgetin-like protein 2, found in Homo sapiens (Human).